The sequence spans 304 residues: N-acetylglucosaminyl-phosphatidylinositol de-N-acetylase (304 aa).

The Lumenal portion of the chain corresponds to 1-20 (MKMLRRTKVNFSKLLYKITK). A helical membrane pass occupies residues 21-38 (LAIVLTILYIYFTPKIVS). Residues 39–304 (RNNASLQHIF…FVNEFDVYTY (266 aa)) lie on the Cytoplasmic side of the membrane.

Belongs to the PIGL family.

Its subcellular location is the endoplasmic reticulum membrane. It catalyses the reaction a 6-(N-acetyl-alpha-D-glucosaminyl)-1-(1,2-diacyl-sn-glycero-3-phospho)-1D-myo-inositol + H2O = a 6-(alpha-D-glucosaminyl)-1-(1,2-diacyl-sn-glycero-3-phospho)-1D-myo-inositol + acetate. It functions in the pathway glycolipid biosynthesis; glycosylphosphatidylinositol-anchor biosynthesis. Involved in the second step of GPI biosynthesis. De-N-acetylation of N-acetylglucosaminyl-phosphatidylinositol. The polypeptide is N-acetylglucosaminyl-phosphatidylinositol de-N-acetylase (GPI12) (Saccharomyces cerevisiae (strain ATCC 204508 / S288c) (Baker's yeast)).